A 128-amino-acid chain; its full sequence is uncharacterized protein (128 aa).

The protein resides in the mitochondrion. This is an uncharacterized protein from Schizosaccharomyces pombe (strain 972 / ATCC 24843) (Fission yeast).